A 499-amino-acid chain; its full sequence is Maturase K (499 aa).

This sequence belongs to the intron maturase 2 family. MatK subfamily.

The protein resides in the plastid. It is found in the chloroplast. In terms of biological role, usually encoded in the trnK tRNA gene intron. Probably assists in splicing its own and other chloroplast group II introns. In Neltuma juliflora (Mesquite), this protein is Maturase K.